The sequence spans 213 residues: Uridine kinase (213 aa).

An ATP-binding site is contributed by 13–20; that stretch reads GASASGKS.

Belongs to the uridine kinase family.

It is found in the cytoplasm. The catalysed reaction is uridine + ATP = UMP + ADP + H(+). It carries out the reaction cytidine + ATP = CMP + ADP + H(+). It functions in the pathway pyrimidine metabolism; CTP biosynthesis via salvage pathway; CTP from cytidine: step 1/3. It participates in pyrimidine metabolism; UMP biosynthesis via salvage pathway; UMP from uridine: step 1/1. This is Uridine kinase from Haemophilus influenzae (strain PittEE).